The sequence spans 178 residues: Large ribosomal subunit protein uL13m (178 aa).

The protein belongs to the universal ribosomal protein uL13 family. In terms of assembly, component of the mitochondrial ribosome large subunit (39S) which comprises a 16S rRNA and about 50 distinct proteins. Interacts with OXA1L.

The protein localises to the mitochondrion. The chain is Large ribosomal subunit protein uL13m (MRPL13) from Bos taurus (Bovine).